The sequence spans 212 residues: Adenylate kinase (212 aa).

Residue 10 to 15 participates in ATP binding; it reads GAGKGT. The segment at 30-59 is NMP; sequence STGDILREAMAQETELGQKAKSYIDAGELV. AMP is bound by residues T31, R36, 57 to 59, 84 to 87, and Q91; these read ELV and GYPR. An LID region spans residues 125 to 158; the sequence is RRRVHEETGETYHLDHDPPPEDVDPDLIVQRSDD. ATP-binding positions include R126 and 135-136; that span reads TY. Positions 155 and 166 each coordinate AMP. G194 is a binding site for ATP.

This sequence belongs to the adenylate kinase family. In terms of assembly, monomer.

The protein resides in the cytoplasm. The catalysed reaction is AMP + ATP = 2 ADP. The protein operates within purine metabolism; AMP biosynthesis via salvage pathway; AMP from ADP: step 1/1. In terms of biological role, catalyzes the reversible transfer of the terminal phosphate group between ATP and AMP. Plays an important role in cellular energy homeostasis and in adenine nucleotide metabolism. This chain is Adenylate kinase, found in Salinibacter ruber (strain DSM 13855 / M31).